Reading from the N-terminus, the 204-residue chain is FMN-dependent NADH:quinone oxidoreductase (204 aa).

FMN is bound by residues Ser10 and 15–17; that span reads SLS.

This sequence belongs to the azoreductase type 1 family. In terms of assembly, homodimer. FMN is required as a cofactor.

The enzyme catalyses 2 a quinone + NADH + H(+) = 2 a 1,4-benzosemiquinone + NAD(+). It carries out the reaction N,N-dimethyl-1,4-phenylenediamine + anthranilate + 2 NAD(+) = 2-(4-dimethylaminophenyl)diazenylbenzoate + 2 NADH + 2 H(+). Quinone reductase that provides resistance to thiol-specific stress caused by electrophilic quinones. Functionally, also exhibits azoreductase activity. Catalyzes the reductive cleavage of the azo bond in aromatic azo compounds to the corresponding amines. The chain is FMN-dependent NADH:quinone oxidoreductase from Rhizobium johnstonii (strain DSM 114642 / LMG 32736 / 3841) (Rhizobium leguminosarum bv. viciae).